Consider the following 212-residue polypeptide: Interleukin-6 (212 aa).

Positions 1–29 (MNSFSTSAFGPVAFSLGLLLVLPAAFPAP) are cleaved as a signal peptide. Disulfide bonds link Cys72/Cys78 and Cys101/Cys111. N-linked (GlcNAc...) asparagine glycosylation is present at Asn73. Residue Asn172 is glycosylated (N-linked (GlcNAc...) asparagine).

Belongs to the IL-6 superfamily. Component of a hexamer of two molecules each of IL6, IL6R and IL6ST; first binds to IL6R to associate with the signaling subunit IL6ST. Interacts with IL6R (via the N-terminal ectodomain); this interaction may be affected by IL6R-binding with SORL1, hence decreasing IL6 cis signaling. Interacts with SORL1 (via the N-terminal ectodomain); this interaction leads to IL6 internalization and lysosomal degradation. May form a trimeric complex with the soluble SORL1 ectodomain and soluble IL6R receptor; this interaction might stabilize circulating IL6, hence promoting IL6 trans signaling.

The protein resides in the secreted. Cytokine with a wide variety of biological functions in immunity, tissue regeneration, and metabolism. Binds to IL6R, then the complex associates to the signaling subunit IL6ST/gp130 to trigger the intracellular IL6-signaling pathway. The interaction with the membrane-bound IL6R and IL6ST stimulates 'classic signaling', whereas the binding of IL6 and soluble IL6R to IL6ST stimulates 'trans-signaling'. Alternatively, 'cluster signaling' occurs when membrane-bound IL6:IL6R complexes on transmitter cells activate IL6ST receptors on neighboring receiver cells. In terms of biological role, IL6 is a potent inducer of the acute phase response. Rapid production of IL6 contributes to host defense during infection and tissue injury, but excessive IL6 synthesis is involved in disease pathology. In the innate immune response, is synthesized by myeloid cells, such as macrophages and dendritic cells, upon recognition of pathogens through toll-like receptors (TLRs) at the site of infection or tissue injury. In the adaptive immune response, is required for the differentiation of B cells into immunoglobulin-secreting cells. Plays a major role in the differentiation of CD4(+) T cell subsets. Essential factor for the development of T follicular helper (Tfh) cells that are required for the induction of germinal-center formation. Required to drive naive CD4(+) T cells to the Th17 lineage. Also required for proliferation of myeloma cells and the survival of plasmablast cells. Functionally, acts as an essential factor in bone homeostasis and on vessels directly or indirectly by induction of VEGF, resulting in increased angiogenesis activity and vascular permeability. Induces, through 'trans-signaling' and synergistically with IL1B and TNF, the production of VEGF. Involved in metabolic controls, is discharged into the bloodstream after muscle contraction increasing lipolysis and improving insulin resistance. 'Trans-signaling' in central nervous system also regulates energy and glucose homeostasis. Mediates, through GLP-1, crosstalk between insulin-sensitive tissues, intestinal L cells and pancreatic islets to adapt to changes in insulin demand. Also acts as a myokine. Plays a protective role during liver injury, being required for maintenance of tissue regeneration. Also has a pivotal role in iron metabolism by regulating HAMP/hepcidin expression upon inflammation or bacterial infection. Through activation of IL6ST-YAP-NOTCH pathway, induces inflammation-induced epithelial regeneration. This Cercocebus atys (Sooty mangabey) protein is Interleukin-6 (IL6).